A 236-amino-acid chain; its full sequence is Growth-regulating factor 12 (236 aa).

The interval 1-27 (MLAEGRQVYLPPPPPSKLPRLSGTDPT) is disordered. The QLQ domain occupies 74 to 109 (ALTFMQRQELEQQVLIYRYFAAGAPVPVHLVLPIWK). The WRC domain occupies 140-184 (EPEPGRCRRTDGKKWRCSRDVVPGHKYCERHVHRGRGRSRKPMEA). 2 consecutive short sequence motifs (bipartite nuclear localization signal) follow at residues 145–155 (RCRRTDGKKWR) and 173–180 (RGRGRSRK).

Belongs to the GRF family.

The protein resides in the nucleus. Functionally, transcription activator that plays a regulatory role in gibberellin-induced stem elongation. The polypeptide is Growth-regulating factor 12 (GRF12) (Oryza sativa subsp. japonica (Rice)).